A 430-amino-acid chain; its full sequence is 3-phosphoshikimate 1-carboxyvinyltransferase (430 aa).

3 residues coordinate 3-phosphoshikimate: Lys-20, Ser-21, and Arg-25. Residue Lys-20 coordinates phosphoenolpyruvate. 2 residues coordinate phosphoenolpyruvate: Gly-92 and Arg-120. 3-phosphoshikimate contacts are provided by Ser-166, Gln-168, Asp-312, and Lys-339. Position 168 (Gln-168) interacts with phosphoenolpyruvate. Asp-312 functions as the Proton acceptor in the catalytic mechanism. The phosphoenolpyruvate site is built by Arg-343 and Arg-387.

Belongs to the EPSP synthase family. Monomer.

The protein localises to the cytoplasm. The catalysed reaction is 3-phosphoshikimate + phosphoenolpyruvate = 5-O-(1-carboxyvinyl)-3-phosphoshikimate + phosphate. Its pathway is metabolic intermediate biosynthesis; chorismate biosynthesis; chorismate from D-erythrose 4-phosphate and phosphoenolpyruvate: step 6/7. Functionally, catalyzes the transfer of the enolpyruvyl moiety of phosphoenolpyruvate (PEP) to the 5-hydroxyl of shikimate-3-phosphate (S3P) to produce enolpyruvyl shikimate-3-phosphate and inorganic phosphate. The polypeptide is 3-phosphoshikimate 1-carboxyvinyltransferase (Lactococcus lactis subsp. lactis (strain IL1403) (Streptococcus lactis)).